The chain runs to 344 residues: Anthranilate phosphoribosyltransferase (344 aa).

Residues Gly-85, 88–89 (GD), Thr-93, 95–98 (NIST), 113–121 (KHGGRSVSS), and Ser-125 contribute to the 5-phospho-alpha-D-ribose 1-diphosphate site. Gly-85 contributes to the anthranilate binding site. Ser-97 is a Mg(2+) binding site. Arg-171 contributes to the anthranilate binding site. Mg(2+)-binding residues include Asp-230 and Glu-231.

Belongs to the anthranilate phosphoribosyltransferase family. In terms of assembly, homodimer. Mg(2+) is required as a cofactor.

The catalysed reaction is N-(5-phospho-beta-D-ribosyl)anthranilate + diphosphate = 5-phospho-alpha-D-ribose 1-diphosphate + anthranilate. It functions in the pathway amino-acid biosynthesis; L-tryptophan biosynthesis; L-tryptophan from chorismate: step 2/5. Catalyzes the transfer of the phosphoribosyl group of 5-phosphorylribose-1-pyrophosphate (PRPP) to anthranilate to yield N-(5'-phosphoribosyl)-anthranilate (PRA). This Delftia acidovorans (strain DSM 14801 / SPH-1) protein is Anthranilate phosphoribosyltransferase.